We begin with the raw amino-acid sequence, 238 residues long: Inactive glycoside hydrolase XLP1 (238 aa).

The N-terminal stretch at 1 to 19 (MKSFLIAIVIAVLLPVSAA) is a signal peptide. Glu-133 is a catalytic residue. 2 N-linked (GlcNAc...) asparagine glycosylation sites follow: Asn-171 and Asn-187. The active site involves Glu-219.

Belongs to the glycosyl hydrolase 12 (cellulase H) family. Interacts with host apoplastic glucanase inhibitor GIP2.

The protein localises to the secreted. Its function is as follows. Non-functional secreted XEG1-like protein that binds to host Nicotiana benthamiana apoplastic glucanase inhibitor protein GIP2 more tightly than does XEG1, thus it outcompetes XEG1 for GIP2 binding and frees functional XEG1 to support P.parasitica infection. With XEG1, is required to elevate apoplastic sugar during P.parasitica infection. This is Inactive glycoside hydrolase XLP1 from Phytophthora nicotianae (strain INRA-310) (Phytophthora parasitica).